Reading from the N-terminus, the 149-residue chain is Arginine regulator (149 aa).

This sequence belongs to the ArgR family.

It localises to the cytoplasm. It functions in the pathway amino-acid degradation; L-arginine degradation via ADI pathway. Functionally, regulates the transcription of the arc operon, involved in arginine catabolism. The polypeptide is Arginine regulator (argR1) (Bacillus thuringiensis subsp. konkukian (strain 97-27)).